A 317-amino-acid polypeptide reads, in one-letter code: Beta-ketoacyl-[acyl-carrier-protein] synthase III (317 aa).

Residues Cys112 and His244 contribute to the active site. Residues Gln245–Arg249 are ACP-binding. Asn274 is a catalytic residue.

This sequence belongs to the thiolase-like superfamily. FabH family. Homodimer.

It is found in the cytoplasm. It catalyses the reaction malonyl-[ACP] + acetyl-CoA + H(+) = 3-oxobutanoyl-[ACP] + CO2 + CoA. It functions in the pathway lipid metabolism; fatty acid biosynthesis. Catalyzes the condensation reaction of fatty acid synthesis by the addition to an acyl acceptor of two carbons from malonyl-ACP. Catalyzes the first condensation reaction which initiates fatty acid synthesis and may therefore play a role in governing the total rate of fatty acid production. Possesses both acetoacetyl-ACP synthase and acetyl transacylase activities. Its substrate specificity determines the biosynthesis of branched-chain and/or straight-chain of fatty acids. This is Beta-ketoacyl-[acyl-carrier-protein] synthase III from Rickettsia bellii (strain OSU 85-389).